A 715-amino-acid chain; its full sequence is Fatty acid oxidation complex subunit alpha (715 aa).

Residues 1 to 190 (MIYEGKAITV…KVGAVDAVVA (190 aa)) are enoyl-CoA hydratase/isomerase. Residue Asp297 participates in substrate binding. The interval 312–715 (HDVKQAAVLG…MAKNGQRFFN (404 aa)) is 3-hydroxyacyl-CoA dehydrogenase. NAD(+) is bound by residues Met325, Asp344, 401–403 (VVE), Lys408, and Ser430. His451 acts as the For 3-hydroxyacyl-CoA dehydrogenase activity in catalysis. Asn454 lines the NAD(+) pocket. Residues Asn501 and Tyr660 each coordinate substrate.

It in the N-terminal section; belongs to the enoyl-CoA hydratase/isomerase family. This sequence in the C-terminal section; belongs to the 3-hydroxyacyl-CoA dehydrogenase family. Heterotetramer of two alpha chains (FadB) and two beta chains (FadA).

It catalyses the reaction a (3S)-3-hydroxyacyl-CoA + NAD(+) = a 3-oxoacyl-CoA + NADH + H(+). It carries out the reaction a (3S)-3-hydroxyacyl-CoA = a (2E)-enoyl-CoA + H2O. The enzyme catalyses a 4-saturated-(3S)-3-hydroxyacyl-CoA = a (3E)-enoyl-CoA + H2O. The catalysed reaction is (3S)-3-hydroxybutanoyl-CoA = (3R)-3-hydroxybutanoyl-CoA. It catalyses the reaction a (3Z)-enoyl-CoA = a 4-saturated (2E)-enoyl-CoA. It carries out the reaction a (3E)-enoyl-CoA = a 4-saturated (2E)-enoyl-CoA. Its pathway is lipid metabolism; fatty acid beta-oxidation. Involved in the aerobic and anaerobic degradation of long-chain fatty acids via beta-oxidation cycle. Catalyzes the formation of 3-oxoacyl-CoA from enoyl-CoA via L-3-hydroxyacyl-CoA. It can also use D-3-hydroxyacyl-CoA and cis-3-enoyl-CoA as substrate. This chain is Fatty acid oxidation complex subunit alpha, found in Pseudomonas putida (Arthrobacter siderocapsulatus).